A 297-amino-acid chain; its full sequence is Phosphoribosylaminoimidazole-succinocarboxamide synthase (297 aa).

Belongs to the SAICAR synthetase family.

It carries out the reaction 5-amino-1-(5-phospho-D-ribosyl)imidazole-4-carboxylate + L-aspartate + ATP = (2S)-2-[5-amino-1-(5-phospho-beta-D-ribosyl)imidazole-4-carboxamido]succinate + ADP + phosphate + 2 H(+). It functions in the pathway purine metabolism; IMP biosynthesis via de novo pathway; 5-amino-1-(5-phospho-D-ribosyl)imidazole-4-carboxamide from 5-amino-1-(5-phospho-D-ribosyl)imidazole-4-carboxylate: step 1/2. In Mycobacteroides abscessus (strain ATCC 19977 / DSM 44196 / CCUG 20993 / CIP 104536 / JCM 13569 / NCTC 13031 / TMC 1543 / L948) (Mycobacterium abscessus), this protein is Phosphoribosylaminoimidazole-succinocarboxamide synthase.